We begin with the raw amino-acid sequence, 260 residues long: Triosephosphate isomerase (260 aa).

11 to 13 (NWK) contributes to the substrate binding site. H103 (electrophile) is an active-site residue. E175 functions as the Proton acceptor in the catalytic mechanism. Residues G181, S220, and 241 to 242 (GG) each bind substrate.

The protein belongs to the triosephosphate isomerase family. As to quaternary structure, homodimer.

Its subcellular location is the cytoplasm. It carries out the reaction D-glyceraldehyde 3-phosphate = dihydroxyacetone phosphate. The protein operates within carbohydrate biosynthesis; gluconeogenesis. It functions in the pathway carbohydrate degradation; glycolysis; D-glyceraldehyde 3-phosphate from glycerone phosphate: step 1/1. Involved in the gluconeogenesis. Catalyzes stereospecifically the conversion of dihydroxyacetone phosphate (DHAP) to D-glyceraldehyde-3-phosphate (G3P). This Shewanella frigidimarina (strain NCIMB 400) protein is Triosephosphate isomerase.